Here is a 523-residue protein sequence, read N- to C-terminus: Synaptotagmin-10 (523 aa).

The Vesicular portion of the chain corresponds to 1–55; sequence MSFHKEDGVNSLCQKALHIVTELCFAGQVEWEKCSGIFPRDRGSQGGSSTDISVS. The interval 13 to 35 is cysteine motif; the sequence is CQKALHIVTELCFAGQVEWEKCS. The chain crosses the membrane as a helical span at residues 56–76; it reads LLAVVVSFCGLALLVVSLFVF. Topologically, residues 77-523 are cytoplasmic; the sequence is WKLCWPCWKS…CPSPKPPSTP (447 aa). Position 136 is a phosphothreonine (Thr136). 2 C2 domains span residues 231 to 352 and 363 to 496; these read ICGK…TVWK and DLGE…THWH. Ca(2+)-binding residues include Asp262, Asp268, Asp320, Phe321, Asp322, Ser325, Asp328, Asp394, Asp400, Asp454, and Asp456.

The protein belongs to the synaptotagmin family. Homodimer; disulfide-linked via the cysteine motif. Can also form heterodimers with SYT3, SYT6, SYT7 and SYT9. Requires Ca(2+) as cofactor.

It is found in the cytoplasmic vesicle. The protein localises to the secretory vesicle membrane. Its function is as follows. Ca(2+) sensor specifically required for the Ca(2+)-dependent exocytosis of secretory vesicles containing IGF1 in neurons of the olfactory bulb. Exocytosis of IGF1 is required for sensory perception of smell. Not involved in Ca(2+)-dependent synaptic vesicle exocytosis. Acts through Ca(2+) and phospholipid binding to the C2 domain: Ca(2+) induces binding of the C2-domains to phospholipid membranes and to assembled SNARE-complexes; both actions contribute to triggering exocytosis. The chain is Synaptotagmin-10 (SYT10) from Pongo abelii (Sumatran orangutan).